Consider the following 430-residue polypeptide: Adenylosuccinate synthetase (430 aa).

Residues 12-18 and 40-42 each bind GTP; these read GDEGKGK and GHT. D13 acts as the Proton acceptor in catalysis. Mg(2+) contacts are provided by D13 and G40. IMP contacts are provided by residues 13–16, 38–41, T129, R143, Q224, T239, and R303; these read DEGK and NAGH. The active-site Proton donor is H41. 299–305 is a substrate binding site; sequence TVSNRER. Residues R305, 331–333, and 413–415 contribute to the GTP site; these read KLD and STG.

It belongs to the adenylosuccinate synthetase family. In terms of assembly, homodimer. Mg(2+) serves as cofactor.

It localises to the cytoplasm. The enzyme catalyses IMP + L-aspartate + GTP = N(6)-(1,2-dicarboxyethyl)-AMP + GDP + phosphate + 2 H(+). It participates in purine metabolism; AMP biosynthesis via de novo pathway; AMP from IMP: step 1/2. Functionally, plays an important role in the de novo pathway of purine nucleotide biosynthesis. Catalyzes the first committed step in the biosynthesis of AMP from IMP. This chain is Adenylosuccinate synthetase, found in Ehrlichia ruminantium (strain Gardel).